The chain runs to 56 residues: Large ribosomal subunit protein bL32 (56 aa).

Over residues 1-16 the composition is skewed to basic residues; the sequence is MAVQKSKKSRSMRGMR. The segment at 1–21 is disordered; that stretch reads MAVQKSKKSRSMRGMRRSHDA.

Belongs to the bacterial ribosomal protein bL32 family.

In Vibrio atlanticus (strain LGP32) (Vibrio splendidus (strain Mel32)), this protein is Large ribosomal subunit protein bL32.